A 78-amino-acid chain; its full sequence is Surfactant-associated protein 2 (78 aa).

An N-terminal signal peptide occupies residues 1 to 19 (MGSGLPLVLLLTLLGSSHG). Asn-37 carries an N-linked (GlcNAc...) asparagine glycan.

In terms of processing, N-glycosylated. Predominantly expressed in lung, where it is detected in type II pneumocytes in the alveolus, and in nonciliated epithelium in bronchioli (at protein level). Also detected at lower levels in cervix, esophagus, stomach, testis and kidney.

It localises to the secreted. The protein resides in the cytoplasmic vesicle. Its subcellular location is the secretory vesicle. It is found in the golgi apparatus. Putative surfactant protein. The protein is Surfactant-associated protein 2 (SFTA2) of Homo sapiens (Human).